The sequence spans 559 residues: Glucose-6-phosphate isomerase (559 aa).

E352 serves as the catalytic Proton donor. Active-site residues include H383 and K511.

Belongs to the GPI family.

It localises to the cytoplasm. The enzyme catalyses alpha-D-glucose 6-phosphate = beta-D-fructose 6-phosphate. The protein operates within carbohydrate biosynthesis; gluconeogenesis. Its pathway is carbohydrate degradation; glycolysis; D-glyceraldehyde 3-phosphate and glycerone phosphate from D-glucose: step 2/4. Functionally, catalyzes the reversible isomerization of glucose-6-phosphate to fructose-6-phosphate. This is Glucose-6-phosphate isomerase from Chlorobium phaeobacteroides (strain DSM 266 / SMG 266 / 2430).